The sequence spans 289 residues: tRNA (adenine(58)-N(1))-methyltransferase catalytic subunit TRMT61A (289 aa).

The residue at position 2 (Ser2) is an N-acetylserine. Residues 20 to 22, 35 to 42, 64 to 65, 85 to 89, and 110 to 117 each bind substrate; these read LGH, QTQTRHGV, GW, QILYS, and SGTGSGSV. Residues Leu87, 114–116, Glu135, Arg140, 163–164, and Asp181 contribute to the S-adenosyl-L-methionine site; these read SGS and DV. Substrate contacts are provided by residues 180–183 and 205–212; these read LDIP and SFSPCIEQ. The disordered stretch occupies residues 245-272; that stretch reads LPPPDLGTGTDGPAGSDTSPFRSGTPMK. Residues 250–259 show a composition bias toward low complexity; sequence LGTGTDGPAG. Residue Ser263 is modified to Phosphoserine. Thr278 contributes to the substrate binding site.

This sequence belongs to the class I-like SAM-binding methyltransferase superfamily. TRM61 family. In terms of assembly, heterotetramer; composed of two copies of TRMT6 and two copies of TRMT61A.

It is found in the nucleus. It catalyses the reaction adenosine(58) in tRNA + S-adenosyl-L-methionine = N(1)-methyladenosine(58) in tRNA + S-adenosyl-L-homocysteine + H(+). It carries out the reaction an adenosine in mRNA + S-adenosyl-L-methionine = an N(1)-methyladenosine in mRNA + S-adenosyl-L-homocysteine + H(+). In terms of biological role, catalytic subunit of tRNA (adenine-N(1)-)-methyltransferase, which catalyzes the formation of N(1)-methyladenine at position 58 (m1A58) in initiator methionyl-tRNA. Catalytic subunit of mRNA N(1)-methyltransferase complex, which mediates methylation of adenosine residues at the N(1) position of a small subset of mRNAs: N(1) methylation takes place in tRNA T-loop-like structures of mRNAs and is only present at low stoichiometries. This Homo sapiens (Human) protein is tRNA (adenine(58)-N(1))-methyltransferase catalytic subunit TRMT61A (TRMT61A).